The sequence spans 120 residues: Large ribosomal subunit protein uL24 (120 aa).

The tract at residues 1-26 (MSKQPDKQRKSQRRAPLHERHKQVRA) is disordered. A compositionally biased stretch (basic residues) spans 10-24 (KSQRRAPLHERHKQV).

It belongs to the universal ribosomal protein uL24 family. In terms of assembly, part of the 50S ribosomal subunit. Interacts weakly with protein L4.

One of two assembly initiator proteins, it binds directly to the 5'-end of the 23S rRNA, where it nucleates assembly of the 50S subunit. In terms of biological role, stabilizes the tertiary rRNA structure within the 23S rRNA domain (domain I) to which it binds. Located at the polypeptide exit tunnel on the outside of the subunit. This is Large ribosomal subunit protein uL24 (rpl24) from Haloarcula marismortui (strain ATCC 43049 / DSM 3752 / JCM 8966 / VKM B-1809) (Halobacterium marismortui).